The primary structure comprises 97 residues: Putative pterin-4-alpha-carbinolamine dehydratase (97 aa).

This sequence belongs to the pterin-4-alpha-carbinolamine dehydratase family.

The catalysed reaction is (4aS,6R)-4a-hydroxy-L-erythro-5,6,7,8-tetrahydrobiopterin = (6R)-L-erythro-6,7-dihydrobiopterin + H2O. This chain is Putative pterin-4-alpha-carbinolamine dehydratase, found in Ruegeria pomeroyi (strain ATCC 700808 / DSM 15171 / DSS-3) (Silicibacter pomeroyi).